A 155-amino-acid chain; its full sequence is Cytochrome P450 (155 aa).

Position 99 (Cys-99) interacts with heme.

It belongs to the cytochrome P450 family. Requires heme as cofactor.

The sequence is that of Cytochrome P450 from Helianthus annuus (Common sunflower).